The following is a 208-amino-acid chain: dITP/XTP pyrophosphatase (208 aa).

Substrate is bound at residue 11 to 16 (TGNAKK). The Proton acceptor role is filled by Asp73. Position 73 (Asp73) interacts with Mg(2+). Substrate contacts are provided by residues Ser74, 157–160 (FGYD), Lys180, and 185–186 (HR).

It belongs to the HAM1 NTPase family. Homodimer. Mg(2+) is required as a cofactor.

The catalysed reaction is XTP + H2O = XMP + diphosphate + H(+). It catalyses the reaction dITP + H2O = dIMP + diphosphate + H(+). It carries out the reaction ITP + H2O = IMP + diphosphate + H(+). Functionally, pyrophosphatase that catalyzes the hydrolysis of nucleoside triphosphates to their monophosphate derivatives, with a high preference for the non-canonical purine nucleotides XTP (xanthosine triphosphate), dITP (deoxyinosine triphosphate) and ITP. Seems to function as a house-cleaning enzyme that removes non-canonical purine nucleotides from the nucleotide pool, thus preventing their incorporation into DNA/RNA and avoiding chromosomal lesions. This chain is dITP/XTP pyrophosphatase, found in Rhodopirellula baltica (strain DSM 10527 / NCIMB 13988 / SH1).